The following is a 247-amino-acid chain: Carbonic anhydrase (247 aa).

An N-terminal signal peptide occupies residues 1–34 (MMFNKQIFTILILSLSLALAGSGCISEGAEDNVA). 93–95 (RSD) lines the substrate pocket. E96 serves as the catalytic Proton donor/acceptor. 109-110 (QD) serves as a coordination point for substrate. H115 contacts Zn(2+). Residue E118 is part of the active site. Zn(2+) is bound by residues H151 and H156. Residue N236 participates in substrate binding.

It belongs to the gamma-class carbonic anhydrase family. In terms of assembly, homotrimer. Zn(2+) serves as cofactor.

The protein resides in the secreted. It carries out the reaction hydrogencarbonate + H(+) = CO2 + H2O. Its function is as follows. Reversible hydration of carbon dioxide. Important for growth on acetate. As a probably extracellular enzyme, it may support a H(+)/CH(3)COO(-) symport mechanism and/or conversion of CO(2) to HCO(3)(-), removing excess CO(2) produced by growth on acetate. In Methanosarcina thermophila (strain ATCC 43570 / DSM 1825 / OCM 12 / VKM B-1830 / TM-1), this protein is Carbonic anhydrase.